The primary structure comprises 182 residues: Large ribosomal subunit protein uL6 (182 aa).

The protein belongs to the universal ribosomal protein uL6 family. As to quaternary structure, part of the 50S ribosomal subunit.

Its function is as follows. This protein binds to the 23S rRNA, and is important in its secondary structure. It is located near the subunit interface in the base of the L7/L12 stalk, and near the tRNA binding site of the peptidyltransferase center. The sequence is that of Large ribosomal subunit protein uL6 from Methanocaldococcus jannaschii (strain ATCC 43067 / DSM 2661 / JAL-1 / JCM 10045 / NBRC 100440) (Methanococcus jannaschii).